The sequence spans 821 residues: Kinetochore protein SLK19 (821 aa).

Disordered regions lie at residues 1 to 52 and 99 to 153; these read MNEV…SQFV and FDDK…NDKE. Thr-7 is subject to Phosphothreonine; by CDC28. The span at 15 to 51 shows a compositional bias: polar residues; that stretch reads QAQQREQNSENCSQERNPRTFNSEPDSSFNSPGSSQF. Composition is skewed to basic and acidic residues over residues 99 to 122 and 136 to 153; these read FDDK…DKHV and SSEK…NDKE. Ser-188 and Ser-189 each carry phosphoserine. A Phosphoserine; by CDC28 modification is found at Ser-201. Ser-216 bears the Phosphoserine mark. Thr-273 bears the Phosphothreonine mark. 2 disordered regions span residues 274–298 and 699–720; these read PLYE…DDNQ and EQNN…RDDE. Ser-283 is modified (phosphoserine). Positions 310 to 821 form a coiled coil; the sequence is AKRNEELTDQ…LLKLLENEKK (512 aa).

Post-translationally, cleaved by ESP1 at the onset of anaphase. In terms of processing, phosphorylated by CDC5/Polo-like kinase at the onset of anaphase. Phosphorylation takes places at proximity to cleavage sites and is required for an efficient cleavage by ESP1. Phosphorylated also by CDC28.

The protein resides in the chromosome. The protein localises to the centromere. It is found in the kinetochore. It localises to the cytoplasm. Its subcellular location is the cytoskeleton. The protein resides in the microtubule organizing center. The protein localises to the spindle pole body. In terms of biological role, has a role in spindle assembly and stability. Required to ensure a timely exit form mitosis. Essential to maintain pre-anaphase spindle polarity. Associates to the plus ends of the microtubules at the kinetochore and spindle midzone. A component of the FEAR (CDC14 Early Anaphase Release) network which promotes CDC14 release from the nucleolus during early anaphase. Required for proper chromosome segregation during meiosis I where it prevents premature sister chromatid separation. The polypeptide is Kinetochore protein SLK19 (SLK19) (Saccharomyces cerevisiae (strain ATCC 204508 / S288c) (Baker's yeast)).